Consider the following 901-residue polypeptide: Sperm-associated antigen 1 (901 aa).

TPR repeat units lie at residues 213–246 (ANREKGKGNEAFYSGDYEEAVMYYTRSLSALPTA), 247–279 (IAYNNRAQAEIKLQRWSSALEDCEKALELDPGN), and 280–313 (VKALLRRATTYKHQNKLQEAVDDLRKVLQVEPDN). The interval 322-437 (EVERDLKNSE…DNPSGLKRRG (116 aa)) is disordered. Ser-351 and Ser-359 each carry phosphoserine. TPR repeat units follow at residues 430–464 (PSGLKRRGNELFRGGQFAEAAAQYSVAIAQLEPTG), 472–505 (SILYSNRAACYLKEGNCRDCIQDCNRALELHPFS), 507–539 (KPLLRRAMAYETLEQYRNAYVDYKTVLQIDCGI), 606–639 (FQALKEEGNQLVKDKNYKDAISKYNECLKINSKA), and 640–673 (CAIYTNRALCYLKLGQFEEAKLDCEQALQIDGEN). Residues 694 to 776 (GVDPSQVLLS…AEPAEKLDVS (83 aa)) are disordered. Ser-703 carries the post-translational modification Phosphoserine. The segment covering 708 to 717 (EAARHLDTKN) has biased composition (basic and acidic residues). A phosphoserine mark is found at Ser-739 and Ser-740. 756–763 (PARDGVED) contacts GTP. At Ser-766 the chain carries Phosphoserine.

In terms of tissue distribution, detected in cerebellum, tongue, esophagus, forestomach, sperm and testis.

It localises to the cytoplasm. The protein localises to the dynein axonemal particle. Its function is as follows. May play a role in the cytoplasmic assembly of the ciliary dynein arms. May play a role in fertilization. Binds GTP and has GTPase activity. This Mus musculus (Mouse) protein is Sperm-associated antigen 1 (Spag1).